A 245-amino-acid polypeptide reads, in one-letter code: 23S rRNA (guanosine-2'-O-)-methyltransferase RlmB (245 aa).

The S-adenosyl-L-methionine site is built by Gly197, Ile217, and Leu226.

Belongs to the class IV-like SAM-binding methyltransferase superfamily. RNA methyltransferase TrmH family. RlmB subfamily.

Its subcellular location is the cytoplasm. It catalyses the reaction guanosine(2251) in 23S rRNA + S-adenosyl-L-methionine = 2'-O-methylguanosine(2251) in 23S rRNA + S-adenosyl-L-homocysteine + H(+). Its function is as follows. Specifically methylates the ribose of guanosine 2251 in 23S rRNA. The chain is 23S rRNA (guanosine-2'-O-)-methyltransferase RlmB from Photobacterium profundum (strain SS9).